A 306-amino-acid chain; its full sequence is Curved DNA-binding protein (306 aa).

A J domain is found at 5 to 69 (DYYAIMGVKP…QRRAEYDQLW (65 aa)).

The protein resides in the cytoplasm. It localises to the nucleoid. DNA-binding protein that preferentially recognizes a curved DNA sequence. It is probably a functional analog of DnaJ; displays overlapping activities with DnaJ, but functions under different conditions, probably acting as a molecular chaperone in an adaptive response to environmental stresses other than heat shock. Lacks autonomous chaperone activity; binds native substrates and targets them for recognition by DnaK. Its activity is inhibited by the binding of CbpM. In Salmonella choleraesuis (strain SC-B67), this protein is Curved DNA-binding protein.